The chain runs to 109 residues: Hainantoxin-XVIII-5 (109 aa).

The signal sequence occupies residues 1–18 (MKLSIIIIATSLVIAVVA). A propeptide spanning residues 19-46 (FPSKDSKAIENDKTEQRMEIVVQETARA) is cleaved from the precursor. Cystine bridges form between Cys47–Cys62, Cys55–Cys68, Cys59–Cys108, and Cys61–Cys81.

The protein belongs to the neurotoxin 25 family. F7 subfamily. In terms of tissue distribution, expressed by the venom gland.

The protein localises to the secreted. Putative ion channel inhibitor. This Cyriopagopus hainanus (Chinese bird spider) protein is Hainantoxin-XVIII-5.